The chain runs to 411 residues: Branched-chain-amino-acid aminotransferase, cytosolic (411 aa).

At K247 the chain carries N6-(pyridoxal phosphate)lysine.

This sequence belongs to the class-IV pyridoxal-phosphate-dependent aminotransferase family. In terms of assembly, homodimer. Pyridoxal 5'-phosphate is required as a cofactor. In terms of processing, the N-terminus is blocked. In terms of tissue distribution, brain, low expression in ovary and placenta, but not found in liver, kidney, and skeletal muscle.

It is found in the cytoplasm. The catalysed reaction is L-leucine + 2-oxoglutarate = 4-methyl-2-oxopentanoate + L-glutamate. It carries out the reaction L-isoleucine + 2-oxoglutarate = (S)-3-methyl-2-oxopentanoate + L-glutamate. It catalyses the reaction L-valine + 2-oxoglutarate = 3-methyl-2-oxobutanoate + L-glutamate. In terms of biological role, catalyzes the first reaction in the catabolism of the essential branched chain amino acids leucine, isoleucine, and valine. The chain is Branched-chain-amino-acid aminotransferase, cytosolic (Bcat1) from Rattus norvegicus (Rat).